Here is a 452-residue protein sequence, read N- to C-terminus: Pup--protein ligase (452 aa).

E9 contacts Mg(2+). An ATP-binding site is contributed by R53. Y55 provides a ligand contact to Mg(2+). The active-site Proton acceptor is D57. Residue E63 coordinates Mg(2+). Residues T66 and W419 each coordinate ATP.

It belongs to the Pup ligase/Pup deamidase family. Pup-conjugating enzyme subfamily.

It catalyses the reaction ATP + [prokaryotic ubiquitin-like protein]-L-glutamate + [protein]-L-lysine = ADP + phosphate + N(6)-([prokaryotic ubiquitin-like protein]-gamma-L-glutamyl)-[protein]-L-lysine.. Its pathway is protein degradation; proteasomal Pup-dependent pathway. It functions in the pathway protein modification; protein pupylation. Functionally, catalyzes the covalent attachment of the prokaryotic ubiquitin-like protein modifier Pup to the proteasomal substrate proteins, thereby targeting them for proteasomal degradation. This tagging system is termed pupylation. The ligation reaction involves the side-chain carboxylate of the C-terminal glutamate of Pup and the side-chain amino group of a substrate lysine. In Mycobacterium ulcerans (strain Agy99), this protein is Pup--protein ligase.